The following is a 130-amino-acid chain: uncharacterized protein (130 aa).

It belongs to the thioester dehydratase family. FabZ subfamily.

This is an uncharacterized protein from Bacillus subtilis (strain 168).